Consider the following 892-residue polypeptide: Alanine--tRNA ligase (892 aa).

His-574, His-578, Cys-676, and His-680 together coordinate Zn(2+).

The protein belongs to the class-II aminoacyl-tRNA synthetase family. It depends on Zn(2+) as a cofactor.

The protein localises to the cytoplasm. The catalysed reaction is tRNA(Ala) + L-alanine + ATP = L-alanyl-tRNA(Ala) + AMP + diphosphate. In terms of biological role, catalyzes the attachment of alanine to tRNA(Ala) in a two-step reaction: alanine is first activated by ATP to form Ala-AMP and then transferred to the acceptor end of tRNA(Ala). Also edits incorrectly charged Ser-tRNA(Ala) and Gly-tRNA(Ala) via its editing domain. The protein is Alanine--tRNA ligase of Prochlorococcus marinus (strain MIT 9303).